Reading from the N-terminus, the 335-residue chain is Dihydroorotate dehydrogenase (quinone) (335 aa).

FMN is bound by residues 58–62 (AGADK) and T82. Residue K62 coordinates substrate. 107-111 (NRNGF) provides a ligand contact to substrate. FMN is bound by residues N135 and N168. N168 is a substrate binding site. Residue S171 is the Nucleophile of the active site. A substrate-binding site is contributed by N173. 2 residues coordinate FMN: K213 and G241. 242–243 (NT) serves as a coordination point for substrate. FMN is bound by residues G264, G293, and 314 to 315 (YS).

Belongs to the dihydroorotate dehydrogenase family. Type 2 subfamily. Monomer. It depends on FMN as a cofactor.

Its subcellular location is the cell membrane. The catalysed reaction is (S)-dihydroorotate + a quinone = orotate + a quinol. The protein operates within pyrimidine metabolism; UMP biosynthesis via de novo pathway; orotate from (S)-dihydroorotate (quinone route): step 1/1. Functionally, catalyzes the conversion of dihydroorotate to orotate with quinone as electron acceptor. In Actinobacillus pleuropneumoniae serotype 5b (strain L20), this protein is Dihydroorotate dehydrogenase (quinone).